A 295-amino-acid polypeptide reads, in one-letter code: Putative xyloglucan endotransglucosylase/hydrolase protein 1 (295 aa).

A signal peptide spans 1 to 24; that stretch reads MNKMEYLSIFGFVSVLYLIIRVDA. The 199-residue stretch at 27–225 folds into the GH16 domain; sequence YEVNGIDQSK…WSLAPFKANF (199 aa). E113 serves as the catalytic Nucleophile. The active-site Proton donor is E117. Xyloglucan is bound by residues E117, 129–131, and 139–141; these read QTN and NRE. N-linked (GlcNAc...) asparagine glycosylation occurs at N180. Residues 204–205 and G209 contribute to the xyloglucan site; that span reads NW. Residues N215 and N229 are each glycosylated (N-linked (GlcNAc...) asparagine). Disulfide bonds link C233–C242 and C278–C291. Position 283 (R283) interacts with xyloglucan.

The protein belongs to the glycosyl hydrolase 16 family. XTH group 1 subfamily. In terms of processing, contains at least one intrachain disulfide bond essential for its enzymatic activity.

The protein localises to the secreted. The protein resides in the cell wall. It localises to the extracellular space. It is found in the apoplast. It catalyses the reaction breaks a beta-(1-&gt;4) bond in the backbone of a xyloglucan and transfers the xyloglucanyl segment on to O-4 of the non-reducing terminal glucose residue of an acceptor, which can be a xyloglucan or an oligosaccharide of xyloglucan.. Functionally, may catalyze xyloglucan endohydrolysis (XEH) and/or endotransglycosylation (XET). Cleaves and religates xyloglucan polymers, an essential constituent of the primary cell wall, and thereby participates in cell wall construction of growing tissues. The protein is Putative xyloglucan endotransglucosylase/hydrolase protein 1 (XTH1) of Arabidopsis thaliana (Mouse-ear cress).